The sequence spans 485 residues: Glutamyl-tRNA(Gln) amidotransferase subunit A (485 aa).

Catalysis depends on charge relay system residues Lys-79 and Ser-154. Catalysis depends on Ser-178, which acts as the Acyl-ester intermediate.

This sequence belongs to the amidase family. GatA subfamily. In terms of assembly, heterotrimer of A, B and C subunits.

It carries out the reaction L-glutamyl-tRNA(Gln) + L-glutamine + ATP + H2O = L-glutaminyl-tRNA(Gln) + L-glutamate + ADP + phosphate + H(+). Allows the formation of correctly charged Gln-tRNA(Gln) through the transamidation of misacylated Glu-tRNA(Gln) in organisms which lack glutaminyl-tRNA synthetase. The reaction takes place in the presence of glutamine and ATP through an activated gamma-phospho-Glu-tRNA(Gln). The sequence is that of Glutamyl-tRNA(Gln) amidotransferase subunit A from Desulforamulus reducens (strain ATCC BAA-1160 / DSM 100696 / MI-1) (Desulfotomaculum reducens).